Consider the following 466-residue polypeptide: Metaxin-1 (466 aa).

A compositionally biased stretch (low complexity) spans 1-19 (MLLGGPPRSPRSGTSPKGP). The disordered stretch occupies residues 1–133 (MLLGGPPRSP…AVAGGGPRQG (133 aa)). Positions 20-36 (WSSTGHVQFGKSPQTWP) are enriched in polar residues. Positions 90-110 (ARGPVPRSSAASRARRSLASP) are enriched in low complexity. Glycyl lysine isopeptide (Lys-Gly) (interchain with G-Cter in ubiquitin) cross-links involve residues Lys187, Lys190, Lys227, and Lys317. A helical transmembrane segment spans residues 421 to 441 (ILSVLAGLAAMVGYALLSGIV).

The protein belongs to the metaxin family. Interacts with MTX2/metaxin-2. Associates with the mitochondrial contact site and cristae organizing system (MICOS) complex, composed of at least MICOS10/MIC10, CHCHD3/MIC19, CHCHD6/MIC25, APOOL/MIC27, IMMT/MIC60, APOO/MIC23/MIC26 and QIL1/MIC13. This complex was also known under the names MINOS or MitOS complex. The MICOS complex associates with mitochondrial outer membrane proteins SAMM50, MTX1 and MTX2 (together described as components of the mitochondrial outer membrane sorting assembly machinery (SAM) complex) and DNAJC11, mitochondrial inner membrane protein TMEM11 and with HSPA9. The MICOS and SAM complexes together with DNAJC11 are part of a large protein complex spanning both membranes termed the mitochondrial intermembrane space bridging (MIB) complex. Interacts with ARMC1. Post-translationally, ubiquitinated by PRKN during mitophagy, leading to its degradation and enhancement of mitophagy. Deubiquitinated by USP30.

The protein localises to the membrane. It is found in the mitochondrion outer membrane. Involved in transport of proteins into the mitochondrion. Essential for embryonic development. The chain is Metaxin-1 (MTX1) from Homo sapiens (Human).